The following is a 256-amino-acid chain: Enolase-phosphatase E1 (256 aa).

Residues Asp14 and Glu16 each coordinate Mg(2+). Substrate is bound by residues 142–143 (SS) and Lys176. Asp201 is a binding site for Mg(2+).

It belongs to the HAD-like hydrolase superfamily. MasA/MtnC family. As to quaternary structure, monomer. The cofactor is Mg(2+).

It localises to the cytoplasm. The protein resides in the nucleus. It carries out the reaction 5-methylsulfanyl-2,3-dioxopentyl phosphate + H2O = 1,2-dihydroxy-5-(methylsulfanyl)pent-1-en-3-one + phosphate. Its pathway is amino-acid biosynthesis; L-methionine biosynthesis via salvage pathway; L-methionine from S-methyl-5-thio-alpha-D-ribose 1-phosphate: step 3/6. The protein operates within amino-acid biosynthesis; L-methionine biosynthesis via salvage pathway; L-methionine from S-methyl-5-thio-alpha-D-ribose 1-phosphate: step 4/6. Its function is as follows. Bifunctional enzyme that catalyzes the enolization of 2,3-diketo-5-methylthiopentyl-1-phosphate (DK-MTP-1-P) into the intermediate 2-hydroxy-3-keto-5-methylthiopentenyl-1-phosphate (HK-MTPenyl-1-P), which is then dephosphorylated to form the acireductone 1,2-dihydroxy-3-keto-5-methylthiopentene (DHK-MTPene). In Drosophila sechellia (Fruit fly), this protein is Enolase-phosphatase E1.